The sequence spans 123 residues: Modulator protein MzrA (123 aa).

At 1–8 (MIKRPRWQ) the chain is on the cytoplasmic side. The helical transmembrane segment at 9 to 29 (YVLLIALALLALATLLVPCMV) threads the bilayer. Residues 30 to 123 (RTESELRIRA…EFARAPLNLG (94 aa)) lie on the Periplasmic side of the membrane.

Belongs to the MzrA family. As to quaternary structure, interacts with EnvZ.

The protein localises to the cell inner membrane. Its function is as follows. Modulates the activity of the EnvZ/OmpR two-component regulatory system, probably by directly modulating EnvZ enzymatic activity and increasing stability of phosphorylated OmpR. The protein is Modulator protein MzrA of Serratia proteamaculans (strain 568).